A 341-amino-acid polypeptide reads, in one-letter code: S-adenosylmethionine:tRNA ribosyltransferase-isomerase (341 aa).

It belongs to the QueA family. In terms of assembly, monomer.

The protein resides in the cytoplasm. It carries out the reaction 7-aminomethyl-7-carbaguanosine(34) in tRNA + S-adenosyl-L-methionine = epoxyqueuosine(34) in tRNA + adenine + L-methionine + 2 H(+). The protein operates within tRNA modification; tRNA-queuosine biosynthesis. In terms of biological role, transfers and isomerizes the ribose moiety from AdoMet to the 7-aminomethyl group of 7-deazaguanine (preQ1-tRNA) to give epoxyqueuosine (oQ-tRNA). The polypeptide is S-adenosylmethionine:tRNA ribosyltransferase-isomerase (Staphylococcus haemolyticus (strain JCSC1435)).